The following is a 377-amino-acid chain: 3-dehydroquinate synthase (377 aa).

NAD(+) contacts are provided by residues 115–119 (GVIGD), 139–140 (TS), lysine 152, and lysine 161. Positions 194, 256, and 275 each coordinate Zn(2+).

Belongs to the sugar phosphate cyclases superfamily. Dehydroquinate synthase family. NAD(+) is required as a cofactor. Requires Co(2+) as cofactor. The cofactor is Zn(2+).

It is found in the cytoplasm. The enzyme catalyses 7-phospho-2-dehydro-3-deoxy-D-arabino-heptonate = 3-dehydroquinate + phosphate. It participates in metabolic intermediate biosynthesis; chorismate biosynthesis; chorismate from D-erythrose 4-phosphate and phosphoenolpyruvate: step 2/7. Functionally, catalyzes the conversion of 3-deoxy-D-arabino-heptulosonate 7-phosphate (DAHP) to dehydroquinate (DHQ). This Agrobacterium fabrum (strain C58 / ATCC 33970) (Agrobacterium tumefaciens (strain C58)) protein is 3-dehydroquinate synthase.